The primary structure comprises 74 residues: Consomatin Ma1 (74 aa).

The N-terminal stretch at Met-1–Gly-22 is a signal peptide. A propeptide spanning residues Gly-23–Ser-57 is cleaved from the precursor. Cys-63 and Cys-68 are joined by a disulfide. Trp-65 is modified (D-tryptophan). 3 positions are modified to 4-hydroxyproline: Pro-69, Pro-70, and Pro-72.

The protein belongs to the conotoxin C superfamily. Consomatin family. In terms of tissue distribution, expressed by the venom duct.

Its subcellular location is the secreted. Its function is as follows. Moderately activates human somatostatin receptors (SSTR) with a preferential activation of SSTR1 and SSTR4. In vivo, does not cause behavioral changes in mice within a few minutes of intracranial injection, but causes a progressive loss of movement thereafter. Four to five hours after injection, mice recover, even with the highest dose tested. Shows antinociception and antihyperalgesia activities in two mouse models of acute pain, most probably by acting outside the central nervous system. This Conus magus (Magical cone) protein is Consomatin Ma1.